Reading from the N-terminus, the 524-residue chain is Xanthotoxin 5-hydroxylase CYP82C4 (524 aa).

Residues M1–F21 traverse the membrane as a helical segment. C463 contributes to the heme binding site.

Belongs to the cytochrome P450 family. Heme serves as cofactor. As to expression, expressed in both primary and lateral roots under iron-deficient conditions, except in apical root zones, and mostly in the root epidermal layer.

The protein localises to the membrane. It catalyses the reaction fraxetin + reduced [NADPH--hemoprotein reductase] + O2 = sideretin (reduced form) + oxidized [NADPH--hemoprotein reductase] + H2O + H(+). It carries out the reaction xanthotoxin + reduced [NADPH--hemoprotein reductase] + O2 = 5-hydroxyxanthotoxin + oxidized [NADPH--hemoprotein reductase] + H2O + 2 H(+). Its pathway is phenylpropanoid metabolism. Can hydroxylate xanthotoxin (8-methoxypsoralen) to form 5-hydroxyxanthotoxin (5-hydroxy-8-methoxypsoralen) in vivo and in vitro. Involved in the early iron deficiency response, possibly through an IDE1-like mediated pathway. Involved in the pathway of sideretin biosynthesis from feruloyl CoA, a redox-active catecholic metabolite exuded by roots in response to iron deficiency in order to facilitate the uptake of iron; this pathway consists in the successive conversion from feruloyl CoA to scopoletin, from scopoletin to fraxetin and from fraxetin to sideretin. Catalyzes the biosynthesis of sideretin via fraxetin hydroxylation. This Arabidopsis thaliana (Mouse-ear cress) protein is Xanthotoxin 5-hydroxylase CYP82C4.